The chain runs to 384 residues: Probable peptidoglycan glycosyltransferase FtsW (384 aa).

Over 1-19 (MAAVWRWFVPERPSFYDRG) the chain is Cytoplasmic. The chain crosses the membrane as a helical span at residues 20 to 40 (LLALTFSLMGIGLMMVASASI). At 41 to 54 (KEGPGGDMFYFTKR) the chain is on the periplasmic side. The helical transmembrane segment at 55 to 75 (HLIFLFVCLGIGVGTLYLPLE) threads the bilayer. The Cytoplasmic portion of the chain corresponds to 76–83 (RWREWSGR). The helical transmembrane segment at 84 to 104 (LLVGALGLLFAVLAVGRTVNG) threads the bilayer. Over 105–110 (AKRWIG) the chain is Periplasmic. Residues 111–131 (FGFFNIQPAELAKLALIVFIA) traverse the membrane as a helical segment. At 132–143 (SYLVRRSDEVRG) the chain is on the cytoplasmic side. Residues 144 to 164 (NIAGFVKPLAVVFLLAIMLLA) form a helical membrane-spanning segment. The Periplasmic segment spans residues 165–166 (QP). A helical membrane pass occupies residues 167-187 (DLGSVVVLFVCTFGLLFIGGA). A topological domain (cytoplasmic) is located at residue Lys-188. A helical membrane pass occupies residues 189–209 (LVQFIAIIVAGLSALAGLIIY). Topologically, residues 210 to 267 (EPYRLRRVTSFLDPWADPFGSGYQLTQSLMAFGRGGFFGQGLGNSVQKLSYLPEAHTD) are periplasmic. Residues 268–288 (FVFAILGEELGYFGVLVVLFL) form a helical membrane-spanning segment. At 289 to 316 (QLLLAMKALQIGRTALLRSKFFEGYMAC) the chain is on the cytoplasmic side. Residues 317–337 (GIGIWFSFQTVVNVGAAAGML) traverse the membrane as a helical segment. Topologically, residues 338-343 (PTKGLT) are periplasmic. The chain crosses the membrane as a helical span at residues 344–364 (LPLVSYGGSSLIAITMAVAIL). Over 365–384 (LRIDFERRLDTSHVIQREAA) the chain is Cytoplasmic.

It belongs to the SEDS family. FtsW subfamily.

Its subcellular location is the cell inner membrane. The enzyme catalyses [GlcNAc-(1-&gt;4)-Mur2Ac(oyl-L-Ala-gamma-D-Glu-L-Lys-D-Ala-D-Ala)](n)-di-trans,octa-cis-undecaprenyl diphosphate + beta-D-GlcNAc-(1-&gt;4)-Mur2Ac(oyl-L-Ala-gamma-D-Glu-L-Lys-D-Ala-D-Ala)-di-trans,octa-cis-undecaprenyl diphosphate = [GlcNAc-(1-&gt;4)-Mur2Ac(oyl-L-Ala-gamma-D-Glu-L-Lys-D-Ala-D-Ala)](n+1)-di-trans,octa-cis-undecaprenyl diphosphate + di-trans,octa-cis-undecaprenyl diphosphate + H(+). The protein operates within cell wall biogenesis; peptidoglycan biosynthesis. Its function is as follows. Peptidoglycan polymerase that is essential for cell division. This is Probable peptidoglycan glycosyltransferase FtsW from Tolumonas auensis (strain DSM 9187 / NBRC 110442 / TA 4).